A 732-amino-acid chain; its full sequence is X-ray repair cross-complementing protein 5 (732 aa).

A VWFA domain is found at 9 to 231 (AVVLCMDVGF…DEIYSFSESL (223 aa)). The segment at 138–165 (LSSRFSKSQLDIIIHSLKKCDISLQFFL) is leucine-zipper. Lys144 carries the post-translational modification N6-acetyllysine. Residue Lys195 forms a Glycyl lysine isopeptide (Lys-Gly) (interchain with G-Cter in SUMO2) linkage. The Ku domain occupies 253-452 (IGSNLSIRIA…KYAPTEAQLN (200 aa)). Ser255 and Ser258 each carry phosphoserine. Lys265 carries the post-translational modification N6-acetyllysine. Ser318 is subject to Phosphoserine. N6-acetyllysine is present on Lys332. Residues Lys532 and Lys534 each participate in a glycyl lysine isopeptide (Lys-Gly) (interchain with G-Cter in SUMO2) cross-link. Thr535 carries the phosphothreonine modification. Glycyl lysine isopeptide (Lys-Gly) (interchain with G-Cter in SUMO2) cross-links involve residues Lys566 and Lys568. Phosphoserine; by PRKDC is present on residues Ser577, Ser579, and Ser580. An N6-acetyllysine mark is found at Lys660 and Lys665. Residues Lys669 and Lys688 each participate in a glycyl lysine isopeptide (Lys-Gly) (interchain with G-Cter in SUMO2) cross-link. The residue at position 715 (Thr715) is a Phosphothreonine; by PRKDC. The short motif at 720–728 (EEGGDVDDL) is the EEXXXDL motif element.

This sequence belongs to the ku80 family. Heterodimer composed of XRCC5/Ku80 and XRCC6/Ku70; heterodimerization stabilizes XRCC5 protein. Component of the core long-range non-homologous end joining (NHEJ) complex (also named DNA-PK complex) composed of PRKDC, LIG4, XRCC4, XRCC6/Ku70, XRCC5/Ku86 and NHEJ1/XLF. Additional component of the NHEJ complex includes PAXX. Following autophosphorylation, PRKDC dissociates from DNA, leading to formation of the short-range NHEJ complex, composed of LIG4, XRCC4, XRCC6/Ku70, XRCC5/Ku86 and NHEJ1/XLF. The XRCC5-XRCC6 dimer also associates with NAA15, and this complex displays DNA binding activity towards the osteocalcin FGF response element (OCFRE). In addition, XRCC5 binds to the osteoblast-specific transcription factors MSX2 and RUNX2. Interacts with ELF3. Interacts with APLF (via KBM motif). The XRCC5/XRCC6 dimer associates in a DNA-dependent manner with APEX1. Identified in a complex with DEAF1 and XRCC6. Interacts with NR4A3; the DNA-dependent protein kinase complex DNA-PK phosphorylates and activates NR4A3 and prevents NR4A3 ubiquitinylation and degradation. Interacts with RNF138. Interacts with CYREN isoform 1 (CYREN-1) and isoform 4 (CYREN-2) (via KBM motif). Interacts with WRN (via KBM motif). Interacts (via N-terminus) with HSF1 (via N-terminus); this interaction is direct and prevents XRCC5/XRCC6 heterodimeric binding and non-homologous end joining (NHEJ) repair activities induced by ionizing radiation (IR). Interacts with DHX9; this interaction occurs in a RNA-dependent manner. Part of the HDP-RNP complex composed of at least HEXIM1, PRKDC, XRCC5, XRCC6, paraspeckle proteins (SFPQ, NONO, PSPC1, RBM14, and MATR3) and NEAT1 RNA. Interacts with ERCC6. The XRCC5-XRCC6 dimer associates with ALKBH2. Interacts with TPRN; TPRN interacts with a number of DNA damage response proteins, is recruited to sites of DNA damage and may play a role in DNA damage repair. Interacts with ERCC6L2. In terms of assembly, (Microbial infection) Interacts with human T-cell leukemia virus 1/HTLV-1 protein HBZ. ADP-ribosylated by PARP3. Post-translationally, phosphorylated on serine residues. Phosphorylation by PRKDC may enhance helicase activity. In terms of processing, sumoylated. Ubiquitinated by RNF8 via 'Lys-48'-linked ubiquitination following DNA damage, leading to its degradation and removal from DNA damage sites. Ubiquitinated by RNF138, leading to remove the Ku complex from DNA breaks.

It localises to the nucleus. Its subcellular location is the nucleolus. It is found in the chromosome. Functionally, single-stranded DNA-dependent ATP-dependent helicase that plays a key role in DNA non-homologous end joining (NHEJ) by recruiting DNA-PK to DNA. Required for double-strand break repair and V(D)J recombination. Also has a role in chromosome translocation. The DNA helicase II complex binds preferentially to fork-like ends of double-stranded DNA in a cell cycle-dependent manner. It works in the 3'-5' direction. During NHEJ, the XRCC5-XRRC6 dimer performs the recognition step: it recognizes and binds to the broken ends of the DNA and protects them from further resection. Binding to DNA may be mediated by XRCC6. The XRCC5-XRRC6 dimer acts as a regulatory subunit of the DNA-dependent protein kinase complex DNA-PK by increasing the affinity of the catalytic subunit PRKDC to DNA by 100-fold. The XRCC5-XRRC6 dimer is probably involved in stabilizing broken DNA ends and bringing them together. The assembly of the DNA-PK complex to DNA ends is required for the NHEJ ligation step. The XRCC5-XRRC6 dimer probably also acts as a 5'-deoxyribose-5-phosphate lyase (5'-dRP lyase), by catalyzing the beta-elimination of the 5' deoxyribose-5-phosphate at an abasic site near double-strand breaks. XRCC5 probably acts as the catalytic subunit of 5'-dRP activity, and allows to 'clean' the termini of abasic sites, a class of nucleotide damage commonly associated with strand breaks, before such broken ends can be joined. The XRCC5-XRRC6 dimer together with APEX1 acts as a negative regulator of transcription. In association with NAA15, the XRCC5-XRRC6 dimer binds to the osteocalcin promoter and activates osteocalcin expression. As part of the DNA-PK complex, involved in the early steps of ribosome assembly by promoting the processing of precursor rRNA into mature 18S rRNA in the small-subunit processome. Binding to U3 small nucleolar RNA, recruits PRKDC and XRCC5/Ku86 to the small-subunit processome. Plays a role in the regulation of DNA virus-mediated innate immune response by assembling into the HDP-RNP complex, a complex that serves as a platform for IRF3 phosphorylation and subsequent innate immune response activation through the cGAS-STING pathway. The polypeptide is X-ray repair cross-complementing protein 5 (XRCC5) (Homo sapiens (Human)).